Consider the following 621-residue polypeptide: uncharacterized protein (621 aa).

It belongs to the chlamydial CPn_0512/CT_425/TC_0708 family.

This is an uncharacterized protein from Chlamydia muridarum (strain MoPn / Nigg).